The chain runs to 372 residues: Tryptophan--tRNA ligase (372 aa).

Positions P79–H87 match the 'HIGH' region motif. The disordered stretch occupies residues K247–L268. The 'KMSKS' region signature appears at K256–S260. Residues M257–F267 are compositionally biased toward polar residues.

The protein belongs to the class-I aminoacyl-tRNA synthetase family.

It is found in the cytoplasm. It catalyses the reaction tRNA(Trp) + L-tryptophan + ATP = L-tryptophyl-tRNA(Trp) + AMP + diphosphate + H(+). In Aeropyrum pernix (strain ATCC 700893 / DSM 11879 / JCM 9820 / NBRC 100138 / K1), this protein is Tryptophan--tRNA ligase.